Consider the following 363-residue polypeptide: Biotin synthase (363 aa).

The Radical SAM core domain maps to 40–268 (NVVQVSTLLS…ETQVRLSAGR (229 aa)). Residues Cys55, Cys59, and Cys62 each contribute to the [4Fe-4S] cluster site. Residues Cys99, Cys131, Cys191, and Arg263 each contribute to the [2Fe-2S] cluster site.

This sequence belongs to the radical SAM superfamily. Biotin synthase family. As to quaternary structure, homodimer. It depends on [4Fe-4S] cluster as a cofactor. [2Fe-2S] cluster serves as cofactor.

It carries out the reaction (4R,5S)-dethiobiotin + (sulfur carrier)-SH + 2 reduced [2Fe-2S]-[ferredoxin] + 2 S-adenosyl-L-methionine = (sulfur carrier)-H + biotin + 2 5'-deoxyadenosine + 2 L-methionine + 2 oxidized [2Fe-2S]-[ferredoxin]. The protein operates within cofactor biosynthesis; biotin biosynthesis; biotin from 7,8-diaminononanoate: step 2/2. In terms of biological role, catalyzes the conversion of dethiobiotin (DTB) to biotin by the insertion of a sulfur atom into dethiobiotin via a radical-based mechanism. This is Biotin synthase from Flavobacterium johnsoniae (strain ATCC 17061 / DSM 2064 / JCM 8514 / BCRC 14874 / CCUG 350202 / NBRC 14942 / NCIMB 11054 / UW101) (Cytophaga johnsonae).